The chain runs to 319 residues: Transcription factor jun-1 (319 aa).

Disordered regions lie at residues 1–52 and 216–264; these read MEED…EKES and NGVN…CRQK. Low complexity predominate over residues 8–19; the sequence is PPSSSTSSESPE. The span at 28–38 shows a compositional bias: basic residues; the sequence is PTRRRKNSKKD. A basic motif region spans residues 244–285; that stretch reads KKKLERKRARNRQAATKCRQKKMDRIKELEEQVLHEKHRGQR. The 64-residue stretch at 244-307 folds into the bZIP domain; it reads KKKLERKRAR…EHFRRTVEHH (64 aa). Residues 286-293 form a leucine-zipper region; it reads LDAELLEL.

It belongs to the bZIP family. Jun subfamily. Heterodimer; with fos-1. In terms of tissue distribution, isoform a, isoform b, isoform c and isoform d are expressed in the spermatheca.

It localises to the nucleus. In terms of biological role, transcription factor that recognizes and binds to the AP-1 non-canonical enhancer heptamer motif 5'-TTAGTCA-3'. Required for ovulation. Controls plc-1 expression in the spermatheca to regulate spermathecal valve dilation. This is Transcription factor jun-1 from Caenorhabditis elegans.